The sequence spans 103 residues: Cycloviolacin-O9 (103 aa).

The first 9 residues, 1 to 9 (AAFALPAFA), serve as a signal peptide directing secretion. A propeptide spanning residues 10–69 (SFEKDVITPAALEAVLNRKAPLYNIMMENDAILNVIANVKTVISNPVLEEALLKTNHGVN) is cleaved from the precursor. Residues 70-99 (GIPCGESCVWIPCLTSAVGCSCKSKVCYRN) constitute a cross-link (cyclopeptide (Gly-Asn)). Intrachain disulfides connect Cys73-Cys89, Cys77-Cys91, and Cys82-Cys96. A propeptide spanning residues 100–103 (SLDN) is cleaved from the precursor.

Post-translationally, this is a cyclic peptide.

Probably participates in a plant defense mechanism. This is Cycloviolacin-O9 from Viola biflora (Yellow wood violet).